We begin with the raw amino-acid sequence, 404 residues long: Ubiquitin-like modifier-activating enzyme 5 (404 aa).

Serine 45 carries the phosphoserine modification. The ATP site is built by glycine 83, aspartate 104, lysine 127, asparagine 150, and asparagine 184. Zn(2+) is bound by residues cysteine 226 and cysteine 229. Catalysis depends on cysteine 250, which acts as the Glycyl thioester intermediate. Zn(2+) is bound by residues cysteine 303 and cysteine 308. The short motif at isoleucine 334–valine 346 is the UFM1-interacting sequence (UIS) element. A linker region spans residues serine 347–lysine 377. Residues serine 358 and serine 393 each carry the phosphoserine modification. Residues aspartate 389–methionine 404 carry the UFC1-binding sequence (UFC) motif.

This sequence belongs to the ubiquitin-activating E1 family. UBA5 subfamily. In terms of assembly, homodimer; homodimerization is required for UFM1 activation. Interacts (via UIS motif) with UFM1; binds UFM1 via a trans-binding mechanism in which UFM1 interacts with distinct sites in both subunits of the UBA5 homodimer. Interacts (via C-terminus) with UFC1. Interacts (via UIS motif) with GABARAPL2 and, with lower affinity, with GABARAP and GABARAPL1.

Its subcellular location is the cytoplasm. The protein resides in the nucleus. It is found in the endoplasmic reticulum membrane. It localises to the golgi apparatus. Functionally, E1-like enzyme which specifically catalyzes the first step in ufmylation. Activates UFM1 by first adenylating its C-terminal glycine residue with ATP, and thereafter linking this residue to the side chain of a cysteine residue in E1, yielding a UFM1-E1 thioester and free AMP. Activates UFM1 via a trans-binding mechanism, in which UFM1 interacts with distinct sites in both subunits of the UBA5 homodimer. Trans-binding also promotes stabilization of the UBA5 homodimer, and enhances ATP-binding. Transfer of UFM1 from UBA5 to the E2-like enzyme UFC1 also takes place using a trans mechanism. Ufmylation plays a key role in various processes, such as ribosome recycling, response to DNA damage, interferon response or reticulophagy (also called ER-phagy). Ufmylation is essential for erythroid differentiation of both megakaryocytes and erythrocytes. The sequence is that of Ubiquitin-like modifier-activating enzyme 5 from Pongo abelii (Sumatran orangutan).